The chain runs to 103 residues: UPF0145 protein NT01CX_0170 (103 aa).

Belongs to the UPF0145 family.

This is UPF0145 protein NT01CX_0170 from Clostridium novyi (strain NT).